The primary structure comprises 359 residues: MRQIIIAAGIAILVSIMLTPVLIRVFSRQGFGQEIRDDGPQHHQKKRGTPSMGGVAILAGMWAGYFGSHLVGIAFGSDGPSASGLLVLALATMLGGVGFIDDFIKIRKARNLGLNKTSKTVGQILSALVFGVLVLQFRNTDGLTPGSPQLSYVREIATVAMPAAIFVLFCVILVMSWSNAVNFTDGLDGLAGGCMAMVTGAYVIVTFWQYRNACSTHPGIACYNVRDPLDLAVIAAATAGACIGFLWWNAAPAKIFMGDTGSLALGGVIAGLSVTTRTELLAVVLGALFVAEIVSVVLQIAAFRTTGRRVFRMAPFHHHFELLGWAETTVIIRFWLLTAIACGLGLALFYGEWLATIGD.

Transmembrane regions (helical) follow at residues 3-23, 55-75, 84-104, 117-137, 156-176, 187-207, 231-251, 255-275, 280-300, and 334-354; these read QIII…PVLI, VAIL…GIAF, GLLV…DDFI, TSKT…VLQF, IATV…LVMS, LDGL…IVTF, LAVI…WNAA, IFMG…LSVT, LLAV…VLQI, and FWLL…GEWL.

It belongs to the glycosyltransferase 4 family. MraY subfamily. Mg(2+) serves as cofactor.

It is found in the cell membrane. It carries out the reaction UDP-N-acetyl-alpha-D-muramoyl-L-alanyl-gamma-D-glutamyl-meso-2,6-diaminopimeloyl-D-alanyl-D-alanine + di-trans,octa-cis-undecaprenyl phosphate = di-trans,octa-cis-undecaprenyl diphospho-N-acetyl-alpha-D-muramoyl-L-alanyl-D-glutamyl-meso-2,6-diaminopimeloyl-D-alanyl-D-alanine + UMP. It participates in cell wall biogenesis; peptidoglycan biosynthesis. In terms of biological role, catalyzes the initial step of the lipid cycle reactions in the biosynthesis of the cell wall peptidoglycan: transfers peptidoglycan precursor phospho-MurNAc-pentapeptide from UDP-MurNAc-pentapeptide onto the lipid carrier undecaprenyl phosphate, yielding undecaprenyl-pyrophosphoryl-MurNAc-pentapeptide, known as lipid I. The chain is Phospho-N-acetylmuramoyl-pentapeptide-transferase from Mycobacteroides abscessus (strain ATCC 19977 / DSM 44196 / CCUG 20993 / CIP 104536 / JCM 13569 / NCTC 13031 / TMC 1543 / L948) (Mycobacterium abscessus).